The sequence spans 651 residues: p-hydroxybenzoic acid efflux pump subunit AaeB (651 aa).

11 helical membrane passes run 11 to 31, 41 to 61, 65 to 85, 91 to 111, 117 to 137, 150 to 170, 367 to 387, 404 to 424, 428 to 448, 454 to 474, and 480 to 500; these read FACK…WFEM, AAIV…SGAI, GLLR…IIMT, VVML…SSLV, YVFA…QSSP, EIIL…PRSV, LFWL…LGVV, FLIG…LVLP, QSLL…GIEI, GSLG…PMTF, and LDNA…IMLI.

Belongs to the aromatic acid exporter ArAE (TC 2.A.85) family.

The protein resides in the cell inner membrane. Forms an efflux pump with AaeA. Could function as a metabolic relief valve, allowing to eliminate certain compounds when they accumulate to high levels in the cell. In Musicola paradisiaca (strain Ech703) (Dickeya paradisiaca), this protein is p-hydroxybenzoic acid efflux pump subunit AaeB.